We begin with the raw amino-acid sequence, 179 residues long: ATP synthase subunit delta (179 aa).

It belongs to the ATPase delta chain family. In terms of assembly, F-type ATPases have 2 components, F(1) - the catalytic core - and F(0) - the membrane proton channel. F(1) has five subunits: alpha(3), beta(3), gamma(1), delta(1), epsilon(1). F(0) has three main subunits: a(1), b(2) and c(10-14). The alpha and beta chains form an alternating ring which encloses part of the gamma chain. F(1) is attached to F(0) by a central stalk formed by the gamma and epsilon chains, while a peripheral stalk is formed by the delta and b chains.

The protein localises to the cell membrane. Its function is as follows. F(1)F(0) ATP synthase produces ATP from ADP in the presence of a proton or sodium gradient. F-type ATPases consist of two structural domains, F(1) containing the extramembraneous catalytic core and F(0) containing the membrane proton channel, linked together by a central stalk and a peripheral stalk. During catalysis, ATP synthesis in the catalytic domain of F(1) is coupled via a rotary mechanism of the central stalk subunits to proton translocation. In terms of biological role, this protein is part of the stalk that links CF(0) to CF(1). It either transmits conformational changes from CF(0) to CF(1) or is implicated in proton conduction. The polypeptide is ATP synthase subunit delta (Clostridium botulinum (strain Alaska E43 / Type E3)).